The chain runs to 289 residues: 4-hydroxy-tetrahydrodipicolinate synthase (289 aa).

Thr-44 is a binding site for pyruvate. The Proton donor/acceptor role is filled by Tyr-130. Lys-158 (schiff-base intermediate with substrate) is an active-site residue. Ile-200 contributes to the pyruvate binding site.

Belongs to the DapA family. Homotetramer; dimer of dimers.

It is found in the cytoplasm. The enzyme catalyses L-aspartate 4-semialdehyde + pyruvate = (2S,4S)-4-hydroxy-2,3,4,5-tetrahydrodipicolinate + H2O + H(+). Its pathway is amino-acid biosynthesis; L-lysine biosynthesis via DAP pathway; (S)-tetrahydrodipicolinate from L-aspartate: step 3/4. Catalyzes the condensation of (S)-aspartate-beta-semialdehyde [(S)-ASA] and pyruvate to 4-hydroxy-tetrahydrodipicolinate (HTPA). The chain is 4-hydroxy-tetrahydrodipicolinate synthase from Archaeoglobus fulgidus (strain ATCC 49558 / DSM 4304 / JCM 9628 / NBRC 100126 / VC-16).